We begin with the raw amino-acid sequence, 308 residues long: Aspartate carbamoyltransferase catalytic subunit (308 aa).

Carbamoyl phosphate contacts are provided by R55 and T56. K83 contacts L-aspartate. Carbamoyl phosphate-binding residues include R105, H133, and Q136. L-aspartate contacts are provided by R166 and R220. Residues G261 and P262 each coordinate carbamoyl phosphate.

This sequence belongs to the aspartate/ornithine carbamoyltransferase superfamily. ATCase family. As to quaternary structure, heterododecamer (2C3:3R2) of six catalytic PyrB chains organized as two trimers (C3), and six regulatory PyrI chains organized as three dimers (R2).

The catalysed reaction is carbamoyl phosphate + L-aspartate = N-carbamoyl-L-aspartate + phosphate + H(+). Its pathway is pyrimidine metabolism; UMP biosynthesis via de novo pathway; (S)-dihydroorotate from bicarbonate: step 2/3. Its function is as follows. Catalyzes the condensation of carbamoyl phosphate and aspartate to form carbamoyl aspartate and inorganic phosphate, the committed step in the de novo pyrimidine nucleotide biosynthesis pathway. The protein is Aspartate carbamoyltransferase catalytic subunit of Chlorobium limicola (strain DSM 245 / NBRC 103803 / 6330).